A 177-amino-acid chain; its full sequence is Inner membrane protein p22 (177 aa).

Residues 1–7 (MFNIKMT) are Intravirion-facing. Residues 8–28 (ISVLLIALIVLLIIILVVFLY) form a helical membrane-spanning segment. Residues 29–177 (YKKQQPPKKV…IALPRNHKHA (149 aa)) are Virion surface-facing.

It belongs to the asfivirus inner membrane protein p22 family.

Its subcellular location is the virion membrane. The protein localises to the host cell membrane. This is Inner membrane protein p22 from African swine fever virus (isolate Warthog/Namibia/Wart80/1980) (ASFV).